Reading from the N-terminus, the 381-residue chain is cAMP-dependent protein kinase type I-alpha regulatory subunit (381 aa).

Met1 bears the N-acetylmethionine mark. At Ala2 the chain carries N-acetylalanine; in cAMP-dependent protein kinase type I-alpha regulatory subunit, N-terminally processed. The tract at residues 2–136 (ASGSMATSEE…ALAKAIEKNV (135 aa)) is dimerization and phosphorylation. Ser3 carries the post-translational modification Phosphoserine. The interval 73–96 (IRTDSREDEISPPPPNPVVKGRRR) is disordered. Thr75 is subject to Phosphothreonine. Phosphoserine occurs at positions 77 and 83. The short motif at 96–100 (RRGAI) is the Pseudophosphorylation motif element. The residue at position 101 (Ser101) is a Phosphoserine. 3',5'-cyclic AMP is bound by residues 137-254 (LFSH…SKVS), Glu202, Arg211, 255-381 (ILES…SLSV), Glu326, and Arg335. Residue Ser258 is modified to Phosphoserine.

This sequence belongs to the cAMP-dependent kinase regulatory chain family. As to quaternary structure, the inactive holoenzyme is composed of two regulatory chains and two catalytic chains. Activation by cAMP releases the two active catalytic monomers and the regulatory dimer. Interacts with PRKACA and PRKACB. PRKAR1A also interacts with RFC2; the complex may be involved in cell survival. Interacts with AKAP4. Interacts with RARA; the interaction occurs in the presence of cAMP or FSH and regulates RARA transcriptional activity. Interacts with the phosphorylated form of PJA2. Interacts with PRKX; regulates this cAMP-dependent protein kinase. Interacts with CBFA2T3. Interacts with smAKAP; this interaction may target PRKAR1A to the plasma membrane. Interacts with AICDA. Post-translationally, the pseudophosphorylation site binds to the substrate-binding region of the catalytic chain, resulting in the inhibition of its activity.

The protein resides in the cell membrane. Its function is as follows. Regulatory subunit of the cAMP-dependent protein kinases involved in cAMP signaling in cells. This is cAMP-dependent protein kinase type I-alpha regulatory subunit (Prkar1a) from Mus musculus (Mouse).